Here is a 238-residue protein sequence, read N- to C-terminus: Probable transcriptional regulatory protein SAB0618 (238 aa).

This sequence belongs to the TACO1 family. YeeN subfamily.

The protein localises to the cytoplasm. In Staphylococcus aureus (strain bovine RF122 / ET3-1), this protein is Probable transcriptional regulatory protein SAB0618.